The following is a 249-amino-acid chain: Small ribosomal subunit protein uS2 (249 aa).

The protein belongs to the universal ribosomal protein uS2 family.

This is Small ribosomal subunit protein uS2 from Polynucleobacter asymbioticus (strain DSM 18221 / CIP 109841 / QLW-P1DMWA-1) (Polynucleobacter necessarius subsp. asymbioticus).